A 179-amino-acid chain; its full sequence is Large ribosomal subunit protein uL5 (179 aa).

Belongs to the universal ribosomal protein uL5 family. As to quaternary structure, part of the 50S ribosomal subunit; part of the 5S rRNA/L5/L18/L25 subcomplex. Contacts the 5S rRNA and the P site tRNA. Forms a bridge to the 30S subunit in the 70S ribosome.

Its function is as follows. This is one of the proteins that bind and probably mediate the attachment of the 5S RNA into the large ribosomal subunit, where it forms part of the central protuberance. In the 70S ribosome it contacts protein S13 of the 30S subunit (bridge B1b), connecting the 2 subunits; this bridge is implicated in subunit movement. Contacts the P site tRNA; the 5S rRNA and some of its associated proteins might help stabilize positioning of ribosome-bound tRNAs. This is Large ribosomal subunit protein uL5 from Dehalococcoides mccartyi (strain ATCC BAA-2266 / KCTC 15142 / 195) (Dehalococcoides ethenogenes (strain 195)).